The following is a 537-amino-acid chain: Probable E3 ubiquitin-protein ligase ARI3 (537 aa).

The tract at residues 1–30 (MDDDYMMLDDDYGEEEDENYSEDDNYSEAE) is disordered. Residues 117 to 331 (KTMKCDVCME…IAGHSCGRYK (215 aa)) form a TRIAD supradomain region. Residues Cys121, Cys124, Cys139, His141, Cys144, Cys147, Cys166, Cys171, Cys210, Cys216, Cys234, Cys236, Cys241, Cys244, His249, Cys254, Cys281, and Cys284 each coordinate Zn(2+). The RING-type 1 zinc-finger motif lies at 121 to 171 (CDVCMEDDLPSNVMTRMECGHRFCNDCWIGHFTVKINEGESKRILCMAHEC). The IBR-type zinc finger occupies 190 to 254 (DRYDRFLIES…LSESHSPCSC (65 aa)). The RING-type 2; atypical zinc-finger motif lies at 281–309 (CPKCSKPIQKRDGCNLMTCKCGQHFCWLC). The active site involves Cys294. 6 residues coordinate Zn(2+): Cys299, Cys301, Cys306, Cys309, His317, and Cys327.

This sequence belongs to the RBR family. Ariadne subfamily. Zn(2+) is required as a cofactor. In terms of tissue distribution, ubiquitous.

The enzyme catalyses [E2 ubiquitin-conjugating enzyme]-S-ubiquitinyl-L-cysteine + [acceptor protein]-L-lysine = [E2 ubiquitin-conjugating enzyme]-L-cysteine + [acceptor protein]-N(6)-ubiquitinyl-L-lysine.. Its pathway is protein modification; protein ubiquitination. Functionally, might act as an E3 ubiquitin-protein ligase, or as part of E3 complex, which accepts ubiquitin from specific E2 ubiquitin-conjugating enzymes and then transfers it to substrates. This is Probable E3 ubiquitin-protein ligase ARI3 (ARI3) from Arabidopsis thaliana (Mouse-ear cress).